The following is a 776-amino-acid chain: Protein translocase subunit SecA 2 (776 aa).

ATP contacts are provided by residues glutamine 80, 98–102 (GEGKT), and aspartate 486.

Belongs to the SecA family. As to quaternary structure, monomer and homodimer. Part of the essential Sec protein translocation apparatus which comprises SecA, SecYEG and auxiliary proteins SecDF. Other proteins may also be involved.

The protein localises to the cell membrane. It localises to the cytoplasm. The enzyme catalyses ATP + H2O + cellular proteinSide 1 = ADP + phosphate + cellular proteinSide 2.. In terms of biological role, part of the Sec protein translocase complex. Interacts with the SecYEG preprotein conducting channel. Has a central role in coupling the hydrolysis of ATP to the transfer of proteins into and across the cell membrane, serving as an ATP-driven molecular motor driving the stepwise translocation of polypeptide chains across the membrane. The chain is Protein translocase subunit SecA 2 from Listeria welshimeri serovar 6b (strain ATCC 35897 / DSM 20650 / CCUG 15529 / CIP 8149 / NCTC 11857 / SLCC 5334 / V8).